A 353-amino-acid polypeptide reads, in one-letter code: Beta-agarase B (353 aa).

The N-terminal stretch at 1–17 is a signal peptide; the sequence is MYLIYLRLVFCCALLLG. A lipid anchor (N-palmitoyl cysteine) is attached at C18. C18 carries the S-diacylglycerol cysteine lipid modification. The disordered stretch occupies residues 30–58; the sequence is LPVEQEQEQETEQEGEPEESSEQDLVEEV. The span at 32–58 shows a compositional bias: acidic residues; sequence VEQEQEQETEQEGEPEESSEQDLVEEV. One can recognise a GH16 domain in the interval 58 to 353; sequence VDWKDIPVPA…WIRIYKPVEK (296 aa). Residues 105–107 and D181 contribute to the substrate site; that span reads YHN. E184 functions as the Nucleophile in the catalytic mechanism. Residue E189 is the Proton donor of the active site. Substrate contacts are provided by H215, R219, D224, Q226, and E308.

This sequence belongs to the glycosyl hydrolase 16 family. As to quaternary structure, homodimer.

It is found in the cell outer membrane. The enzyme catalyses Hydrolysis of (1-&gt;4)-beta-D-galactosidic linkages in agarose, giving the tetramer as the predominant product.. Cleaves the beta-1,4-linkages between beta-D-galactose and alpha-L-3,6-anhydro-galactose residues in agarose. Cleaves agarose in a random manner with retention of the anomeric-bond configuration, producing beta-anomers that give rise progressively to alpha-anomers when mutarotation takes place. Also tolerant to hybrid substrates containing C6-sulfate groups at the -4, +1, and +3 positions. This Zobellia galactanivorans (strain DSM 12802 / CCUG 47099 / CIP 106680 / NCIMB 13871 / Dsij) protein is Beta-agarase B (agaB).